The primary structure comprises 302 residues: MPRVGLIVNDGKELAVKTAKTFQKKLEDSGFEVVRVSSAGGLLGFTNPDQYMSSQGYNSCIPEGFDSSILFAVVLGGDGTVLSAARQTAPLGIPILTVNTGHLGFLAEAYLSDIDKIFKHLVARQWSIEKRTSLVVSVMRGDQCRWEALCLNEMALHREPMTSMCHFEISVGRHAPVDISADGVILSTPTGSTAYSLSAGGPVITPDCPVLQLTPVSPHSLASRALVFSNEEPVTVFPATPERLMMVVDGSAGCYVWPEDRVLIRKSDHPVKFIRLSDHEFFQVLRNKLGWGLPHVAKPDKT.

Asp-78 acts as the Proton acceptor in catalysis. Residues 78–79 (DG), 152–153 (NE), Asp-182, and 193–198 (TAYSLS) each bind NAD(+).

This sequence belongs to the NAD kinase family. Requires a divalent metal cation as cofactor.

Its subcellular location is the cytoplasm. The catalysed reaction is NAD(+) + ATP = ADP + NADP(+) + H(+). Its function is as follows. Involved in the regulation of the intracellular balance of NAD and NADP, and is a key enzyme in the biosynthesis of NADP. Catalyzes specifically the phosphorylation on 2'-hydroxyl of the adenosine moiety of NAD to yield NADP. This chain is NAD kinase 2, found in Prochlorococcus marinus (strain NATL2A).